A 437-amino-acid chain; its full sequence is O-antigen export system ATP-binding protein RfbB (437 aa).

The region spanning 37–256 (LRGKRQSRDA…YREAISLAEA (220 aa)) is the ABC transporter domain. An ATP-binding site is contributed by 69–76 (GRNGSGKS).

Belongs to the ABC transporter superfamily.

Its subcellular location is the cell inner membrane. May form an ATP-driven O-antigen export apparatus, in association with RfbA. This is O-antigen export system ATP-binding protein RfbB (rfbB) from Myxococcus xanthus.